Here is a 435-residue protein sequence, read N- to C-terminus: Kynurenine--oxoglutarate transaminase (435 aa).

Positions 46 and 198 each coordinate substrate. At K262 the chain carries N6-(pyridoxal phosphate)lysine. R413 lines the substrate pocket.

This sequence belongs to the class-I pyridoxal-phosphate-dependent aminotransferase family. Homodimer. Pyridoxal 5'-phosphate serves as cofactor.

It localises to the cytoplasm. It carries out the reaction L-kynurenine + 2-oxoglutarate = kynurenate + L-glutamate + H2O. The enzyme catalyses 3-phenylpyruvate + L-glutamine = 2-oxoglutaramate + L-phenylalanine. The catalysed reaction is an S-substituted L-cysteine + H2O = a thiol + pyruvate + NH4(+). The protein operates within amino-acid degradation; L-kynurenine degradation; kynurenate from L-kynurenine: step 1/2. Functionally, catalyzes the irreversible transamination of the L-tryptophan metabolite L-kynurenine to form kynurenic acid (KA). Metabolizes the cysteine conjugates of certain halogenated alkenes and alkanes to form reactive metabolites. Catalyzes the beta-elimination of S-conjugates and Se-conjugates of L-(seleno)cysteine, resulting in the cleavage of the C-S or C-Se bond. The chain is Kynurenine--oxoglutarate transaminase (ccbl) from Dictyostelium discoideum (Social amoeba).